Reading from the N-terminus, the 499-residue chain is Citrinin biosynthesis cluster MFS transporter mrr1 (499 aa).

The segment at 1 to 29 is disordered; that stretch reads MKEEIDAPVSTDASGTDLENARDQPSGEK. 8 consecutive transmembrane segments (helical) span residues 58 to 78, 95 to 115, 124 to 144, 155 to 175, 187 to 207, 215 to 235, 291 to 311, and 327 to 347; these read SLIT…SSVF, VMTL…LVWG, LKPL…VAVA, FFLG…LADF, LFSA…GFIV, WTAW…FLTL, ILVC…LFFV, and GIAA…CLLV. Asn361 carries N-linked (GlcNAc...) asparagine glycosylation. Helical transmembrane passes span 370–390, 395–415, 443–463, and 467–487; these read LPPM…FGWT, ISWA…LMIW, AVGA…GVDW, and LLGF…FYGA.

Belongs to the major facilitator superfamily. CAR1 family.

Its subcellular location is the membrane. In terms of biological role, MFS transporter; part of the gene cluster that mediates the biosynthesis the mycotoxin citrinin, a hepato-nephrotoxic compound to humans due to inhibition of respiration complex III. This Monascus ruber (Mold) protein is Citrinin biosynthesis cluster MFS transporter mrr1.